The sequence spans 781 residues: AP-3 complex subunit beta (781 aa).

5 HEAT repeats span residues 113–151 (PNLALLSINSIQRSLSDSNPDVRALALKTLSDINIASLY), 153–186 (IILHSLKKTVIDSSEVVRCQVAMTLLKLFKEQGI), 187–224 (SIKDDVMPMLKSLLADSEPSVVSAALLLFQKAFAQELQ), 294–332 (DHDLNLFLSSLKKLLHSPNAMVIVAVSKAFYQLSSPKTF), and 521–559 (PRICPDVLRRLLPQFSKEHAHVRLQILNLAAKLLSHDVD). 2 disordered regions span residues 694–713 (KPKRSASVSSVPSNTFTSSH) and 731–781 (ARQS…ETTE). The span at 699–712 (ASVSSVPSNTFTSS) shows a compositional bias: polar residues. Positions 746–758 (STSEETDHTDDES) are enriched in acidic residues. A compositionally biased stretch (low complexity) spans 759-774 (GSSSGDESTESSYVSS).

This sequence belongs to the adaptor complexes large subunit family. As to quaternary structure, adaptor protein complex 3 (AP-3) is a heterotetramer composed of 2 large adaptins (APL5 and APL6), a medium adaptin (APM3) and a small adaptin (APS3).

The protein localises to the golgi apparatus. It localises to the cytoplasmic vesicle. The protein resides in the clathrin-coated vesicle membrane. Part of the AP-3 complex, an adaptor-related complex which is not clathrin-associated. The complex is associated with the Golgi region as well as more peripheral structures. It facilitates the budding of vesicles from the Golgi membrane and may be directly involved in trafficking to the vacuole. This chain is AP-3 complex subunit beta (APL6), found in Eremothecium gossypii (strain ATCC 10895 / CBS 109.51 / FGSC 9923 / NRRL Y-1056) (Yeast).